The chain runs to 95 residues: UPF0235 protein Swoo_1329 (95 aa).

The protein belongs to the UPF0235 family.

This chain is UPF0235 protein Swoo_1329, found in Shewanella woodyi (strain ATCC 51908 / MS32).